Here is a 296-residue protein sequence, read N- to C-terminus: MNKKDIATPTRTRALLDKYQFDFKKSLGQNFLIDVNIIQKIIDASNIDERTGVIEVGPGMGSLTEQLAKHAKKVVAFEIDQRLIPVLEDTLSDYDNVTVINEDILKADVVEAVQTHLSDCDKIMVVANLPYYITTPILLNLMSKSLPIDGYVVMMQKEVGERLNAEIGTKAYGSLSIVAQYYTETSKVLTVPKTVFMPPPNVDSIVVKLMKRQAPIVAVDDEDQFFKMTKAAFSQRRKTIANNYQSLFFDGKQKKYIIKTWLEDGGIDPRRRGETLSIKEFANLFNNLKKFPELEF.

S-adenosyl-L-methionine-binding residues include Asn-30, Leu-32, Gly-57, Glu-78, Asp-103, and Asn-128.

This sequence belongs to the class I-like SAM-binding methyltransferase superfamily. rRNA adenine N(6)-methyltransferase family. RsmA subfamily.

Its subcellular location is the cytoplasm. It carries out the reaction adenosine(1518)/adenosine(1519) in 16S rRNA + 4 S-adenosyl-L-methionine = N(6)-dimethyladenosine(1518)/N(6)-dimethyladenosine(1519) in 16S rRNA + 4 S-adenosyl-L-homocysteine + 4 H(+). Its function is as follows. Specifically dimethylates two adjacent adenosines (A1518 and A1519) in the loop of a conserved hairpin near the 3'-end of 16S rRNA in the 30S particle. May play a critical role in biogenesis of 30S subunits. In Staphylococcus carnosus (strain TM300), this protein is Ribosomal RNA small subunit methyltransferase A.